Consider the following 421-residue polypeptide: Pyridinium-3,5-bisthiocarboxylic acid mononucleotide nickel insertion protein (421 aa).

This sequence belongs to the LarC family.

The catalysed reaction is Ni(II)-pyridinium-3,5-bisthiocarboxylate mononucleotide = pyridinium-3,5-bisthiocarboxylate mononucleotide + Ni(2+). Functionally, involved in the biosynthesis of a nickel-pincer cofactor ((SCS)Ni(II) pincer complex). Binds Ni(2+), and functions in nickel delivery to pyridinium-3,5-bisthiocarboxylic acid mononucleotide (P2TMN), to form the mature cofactor. Is thus probably required for the activation of nickel-pincer cofactor-dependent enzymes. The chain is Pyridinium-3,5-bisthiocarboxylic acid mononucleotide nickel insertion protein from Alkaliphilus metalliredigens (strain QYMF).